Reading from the N-terminus, the 587-residue chain is Phosphomethylpyrimidine synthase (587 aa).

Residues asparagine 218, methionine 247, tyrosine 276, histidine 312, 332–334, 373–376, and glutamate 412 contribute to the substrate site; these read SRG and DGLR. Histidine 416 contributes to the Zn(2+) binding site. Tyrosine 439 is a substrate binding site. Histidine 480 contacts Zn(2+). [4Fe-4S] cluster-binding residues include cysteine 560, cysteine 563, and cysteine 568.

It belongs to the ThiC family. [4Fe-4S] cluster serves as cofactor.

It catalyses the reaction 5-amino-1-(5-phospho-beta-D-ribosyl)imidazole + S-adenosyl-L-methionine = 4-amino-2-methyl-5-(phosphooxymethyl)pyrimidine + CO + 5'-deoxyadenosine + formate + L-methionine + 3 H(+). It functions in the pathway cofactor biosynthesis; thiamine diphosphate biosynthesis. In terms of biological role, catalyzes the synthesis of the hydroxymethylpyrimidine phosphate (HMP-P) moiety of thiamine from aminoimidazole ribotide (AIR) in a radical S-adenosyl-L-methionine (SAM)-dependent reaction. The chain is Phosphomethylpyrimidine synthase from Porphyromonas gingivalis (strain ATCC BAA-308 / W83).